A 353-amino-acid chain; its full sequence is S-adenosylmethionine:tRNA ribosyltransferase-isomerase (353 aa).

Belongs to the QueA family. Monomer.

It localises to the cytoplasm. It catalyses the reaction 7-aminomethyl-7-carbaguanosine(34) in tRNA + S-adenosyl-L-methionine = epoxyqueuosine(34) in tRNA + adenine + L-methionine + 2 H(+). It participates in tRNA modification; tRNA-queuosine biosynthesis. Transfers and isomerizes the ribose moiety from AdoMet to the 7-aminomethyl group of 7-deazaguanine (preQ1-tRNA) to give epoxyqueuosine (oQ-tRNA). This chain is S-adenosylmethionine:tRNA ribosyltransferase-isomerase, found in Baumannia cicadellinicola subsp. Homalodisca coagulata.